The primary structure comprises 427 residues: Trigger factor (427 aa).

The PPIase FKBP-type domain maps to 163–248 (GNIAIIDFKG…VKGIKVKELP (86 aa)).

This sequence belongs to the FKBP-type PPIase family. Tig subfamily.

It is found in the cytoplasm. The enzyme catalyses [protein]-peptidylproline (omega=180) = [protein]-peptidylproline (omega=0). Its function is as follows. Involved in protein export. Acts as a chaperone by maintaining the newly synthesized protein in an open conformation. Functions as a peptidyl-prolyl cis-trans isomerase. The sequence is that of Trigger factor from Clostridium botulinum (strain Alaska E43 / Type E3).